The chain runs to 243 residues: UPF0280 protein Memar_1519 (243 aa).

This sequence belongs to the UPF0280 family.

This Methanoculleus marisnigri (strain ATCC 35101 / DSM 1498 / JR1) protein is UPF0280 protein Memar_1519.